The following is a 96-amino-acid chain: Co-chaperonin GroES (96 aa).

Belongs to the GroES chaperonin family. As to quaternary structure, heptamer of 7 subunits arranged in a ring. Interacts with the chaperonin GroEL.

It localises to the cytoplasm. Together with the chaperonin GroEL, plays an essential role in assisting protein folding. The GroEL-GroES system forms a nano-cage that allows encapsulation of the non-native substrate proteins and provides a physical environment optimized to promote and accelerate protein folding. GroES binds to the apical surface of the GroEL ring, thereby capping the opening of the GroEL channel. The protein is Co-chaperonin GroES of Buchnera aphidicola subsp. Myzus persicae (Myzus persicae primary endosymbiont).